The chain runs to 180 residues: Large ribosomal subunit protein uL10 (180 aa).

Belongs to the universal ribosomal protein uL10 family. Part of the ribosomal stalk of the 50S ribosomal subunit. The N-terminus interacts with L11 and the large rRNA to form the base of the stalk. The C-terminus forms an elongated spine to which L12 dimers bind in a sequential fashion forming a multimeric L10(L12)X complex.

In terms of biological role, forms part of the ribosomal stalk, playing a central role in the interaction of the ribosome with GTP-bound translation factors. This chain is Large ribosomal subunit protein uL10 (rplJ), found in Treponema pallidum (strain Nichols).